The following is a 704-amino-acid chain: Neutral ceramidase (704 aa).

Positions 1-23 (MAISKIAFLALIALSGLCGLASA) are cleaved as a signal peptide. An N-linked (GlcNAc...) asparagine glycan is attached at Asn-230. Ser-276 functions as the Nucleophile in the catalytic mechanism. Residues Asn-362, Asn-550, and Asn-598 are each glycosylated (N-linked (GlcNAc...) asparagine).

It belongs to the neutral ceramidase family. In terms of processing, N-glycosylated.

It localises to the secreted. It catalyses the reaction an N-acylsphing-4-enine + H2O = sphing-4-enine + a fatty acid. Functionally, hydrolyzes the sphingolipid ceramide into sphingosine and free fatty acid at an optimal pH of 6.5-7.5. Acts as a key regulator of sphingolipid signaling metabolites by generating sphingosine at the cell surface. The protein is Neutral ceramidase (CDase) of Drosophila pseudoobscura pseudoobscura (Fruit fly).